A 141-amino-acid chain; its full sequence is Putative pre-16S rRNA nuclease (141 aa).

Belongs to the YqgF nuclease family.

It localises to the cytoplasm. Could be a nuclease involved in processing of the 5'-end of pre-16S rRNA. In Acetivibrio thermocellus (strain ATCC 27405 / DSM 1237 / JCM 9322 / NBRC 103400 / NCIMB 10682 / NRRL B-4536 / VPI 7372) (Clostridium thermocellum), this protein is Putative pre-16S rRNA nuclease.